The primary structure comprises 887 residues: Tubulin polyglutamylase TTLL7 (887 aa).

The disordered stretch occupies residues 1-21 (MPSLPQEGVIQGPSPLDLNTE). A TTL domain is found at 38–390 (KGTITANVAG…RTSDKRRNLA (353 aa)). ATP contacts are provided by residues Lys-160, 166–167 (MG), 188–191 (QEYI), and 201–203 (KFD). Arg-227 is a binding site for L-glutamate. Residue 249–250 (TN) participates in ATP binding. The L-glutamate site is built by Tyr-251, Ser-252, and Lys-271. Mg(2+) is bound by residues Asp-336, Glu-349, and Asn-351. Lys-367 is an L-glutamate binding site. Residues 388–450 (NLAKQKAEAQ…ISREEHENRH (63 aa)) are c-MTBD region. 2 disordered regions span residues 519–621 (MGKT…TRPF) and 651–676 (LPHSNDACSTNSQVSESLRQLKTKEQ). Over residues 548-560 (SSDSSYDSSSSSS) the composition is skewed to low complexity. 2 stretches are compositionally biased toward polar residues: residues 593–621 (QQPSSIRRSVSCPRSISAQSPSSGDTRPF) and 656–670 (DACSTNSQVSESLRQ).

The protein belongs to the tubulin--tyrosine ligase family. In terms of assembly, interacts with both alpha- and beta-tubulin (via C-terminal tubulin tails). Requires Mg(2+) as cofactor. As to expression, highly expressed in the nervous system including spinal cord, thalamus, hippocampus, hypothalamus and cerebellum.

The protein localises to the cell projection. Its subcellular location is the cilium. It is found in the cytoplasm. It localises to the cytoskeleton. The protein resides in the cilium basal body. The protein localises to the dendrite. Its subcellular location is the perikaryon. It catalyses the reaction L-glutamyl-[protein] + L-glutamate + ATP = gamma-L-glutamyl-L-glutamyl-[protein] + ADP + phosphate + H(+). The catalysed reaction is (L-glutamyl)(n)-gamma-L-glutamyl-L-glutamyl-[protein] + L-glutamate + ATP = (L-glutamyl)(n+1)-gamma-L-glutamyl-L-glutamyl-[protein] + ADP + phosphate + H(+). Polyglutamylase which modifies tubulin, generating polyglutamate side chains of variable lengths on the gamma-carboxyl group of specific glutamate residues within the C-terminal tail of tubulin. Mediates both ATP-dependent initiation and elongation steps of the polyglutamylation reaction. Preferentially modifies the beta-tubulin tail over an alpha-tail. Competes with monoglycylase TTLL3 for modification site on beta-tubulin substrate, thereby creating an anticorrelation between glycylation and glutamylation reactions. Required for neurite growth; responsible for the strong increase in tubulin polyglutamylation during postnatal neuronal maturation. The sequence is that of Tubulin polyglutamylase TTLL7 from Homo sapiens (Human).